The primary structure comprises 209 residues: 3-demethoxyubiquinol 3-hydroxylase (209 aa).

E58, E88, H91, E140, E172, and H175 together coordinate Fe cation.

The protein belongs to the COQ7 family. Requires Fe cation as cofactor.

It localises to the cell membrane. It catalyses the reaction a 5-methoxy-2-methyl-3-(all-trans-polyprenyl)benzene-1,4-diol + AH2 + O2 = a 3-demethylubiquinol + A + H2O. Its pathway is cofactor biosynthesis; ubiquinone biosynthesis. Catalyzes the hydroxylation of 2-nonaprenyl-3-methyl-6-methoxy-1,4-benzoquinol during ubiquinone biosynthesis. The sequence is that of 3-demethoxyubiquinol 3-hydroxylase from Polynucleobacter asymbioticus (strain DSM 18221 / CIP 109841 / QLW-P1DMWA-1) (Polynucleobacter necessarius subsp. asymbioticus).